Reading from the N-terminus, the 143-residue chain is Endoribonuclease YbeY (143 aa).

Zn(2+) contacts are provided by His111, His115, and Asp121.

Belongs to the endoribonuclease YbeY family. The cofactor is Zn(2+).

It localises to the cytoplasm. Functionally, single strand-specific metallo-endoribonuclease involved in late-stage 70S ribosome quality control and in maturation of the 3' terminus of the 16S rRNA. The sequence is that of Endoribonuclease YbeY from Cytophaga hutchinsonii (strain ATCC 33406 / DSM 1761 / CIP 103989 / NBRC 15051 / NCIMB 9469 / D465).